We begin with the raw amino-acid sequence, 507 residues long: Keratin, type II cuticular Hb5 (507 aa).

A head region spans residues 1 to 123 (MSCRSYRISS…PNAQCVKQEE (123 aa)). Residues 123–434 (EKEQIKSLNS…RLLEGEEHRL (312 aa)) form the IF rod domain. The interval 124–158 (KEQIKSLNSRFAAFIDKVRFLEQQNKLLETKWQFY) is coil 1A. A linker 1 region spans residues 159-168 (QNQRCCESNL). The coil 1B stretch occupies residues 169–269 (EPLFSGYIET…YEEEIRVLQA (101 aa)). Residue Lys-229 forms a Glycyl lysine isopeptide (Lys-Gly) (interchain with G-Cter in SUMO1) linkage. The interval 270–286 (HISDTSVIVKMDNSRDL) is linker 12. The segment at 287–430 (NMDCIIAEIK…ATYRRLLEGE (144 aa)) is coil 2. The tail stretch occupies residues 431–507 (EHRLCEGVGS…CGSSRSVRFA (77 aa)).

Belongs to the intermediate filament family. In terms of assembly, heterotetramer of two type I and two type II keratins. In terms of tissue distribution, synthesis occurs immediately above a small population of matrix cells at the base of the hair bulb and the trichocytes lining the dermal papilla and extends upward through the matrix and ends in the lower part of the cortex of the hair shaft.

This chain is Keratin, type II cuticular Hb5 (KRT85), found in Homo sapiens (Human).